The chain runs to 117 residues: Large ribosomal subunit protein uL18 (117 aa).

Belongs to the universal ribosomal protein uL18 family. As to quaternary structure, part of the 50S ribosomal subunit; part of the 5S rRNA/L5/L18/L25 subcomplex. Contacts the 5S and 23S rRNAs.

Functionally, this is one of the proteins that bind and probably mediate the attachment of the 5S RNA into the large ribosomal subunit, where it forms part of the central protuberance. This is Large ribosomal subunit protein uL18 from Acidithiobacillus ferrooxidans (strain ATCC 23270 / DSM 14882 / CIP 104768 / NCIMB 8455) (Ferrobacillus ferrooxidans (strain ATCC 23270)).